We begin with the raw amino-acid sequence, 419 residues long: 3-isopropylmalate dehydratase large subunit (419 aa).

Residues cysteine 300, cysteine 360, and cysteine 363 each coordinate [4Fe-4S] cluster.

The protein belongs to the aconitase/IPM isomerase family. LeuC type 2 subfamily. In terms of assembly, heterodimer of LeuC and LeuD. [4Fe-4S] cluster is required as a cofactor.

It catalyses the reaction (2R,3S)-3-isopropylmalate = (2S)-2-isopropylmalate. Its pathway is amino-acid biosynthesis; L-leucine biosynthesis; L-leucine from 3-methyl-2-oxobutanoate: step 2/4. Catalyzes the isomerization between 2-isopropylmalate and 3-isopropylmalate, via the formation of 2-isopropylmaleate. This Nitratidesulfovibrio vulgaris (strain DP4) (Desulfovibrio vulgaris) protein is 3-isopropylmalate dehydratase large subunit.